We begin with the raw amino-acid sequence, 436 residues long: Adenosylhomocysteinase (436 aa).

The substrate site is built by Thr-62, Asp-136, and Glu-161. Residue 162–164 (TTT) participates in NAD(+) binding. 2 residues coordinate substrate: Lys-191 and Asp-195. NAD(+)-binding positions include Asn-196, 225–230 (GFGDVG), Glu-248, Asn-283, 304–306 (IGH), and Asn-352.

The protein belongs to the adenosylhomocysteinase family. The cofactor is NAD(+).

The protein localises to the cytoplasm. The catalysed reaction is S-adenosyl-L-homocysteine + H2O = L-homocysteine + adenosine. Its pathway is amino-acid biosynthesis; L-homocysteine biosynthesis; L-homocysteine from S-adenosyl-L-homocysteine: step 1/1. Functionally, may play a key role in the regulation of the intracellular concentration of adenosylhomocysteine. The chain is Adenosylhomocysteinase from Leptospira interrogans serogroup Icterohaemorrhagiae serovar copenhageni (strain Fiocruz L1-130).